The chain runs to 141 residues: MNFKYIIAVSFLIASTYARSVKNDEQSLSQRDVLDEESLREIRGIGGALLSAGKSALKGLAKGLAEHFANGKRTAEEHEVMKRLEAVMRDLDSLDHPEEASEKETRGFNQEEIANLFTKKEKRIIGPVLGLIGKALGGLLG.

The N-terminal stretch at 1–18 (MNFKYIIAVSFLIASTYA) is a signal peptide. A propeptide spanning residues 19 to 43 (RSVKNDEQSLSQRDVLDEESLREIR) is cleaved from the precursor. Asn70 bears the Asparagine amide mark. The propeptide occupies 74 to 123 (TAEEHEVMKRLEAVMRDLDSLDHPEEASEKETRGFNQEEIANLFTKKEKR). Leu140 carries the post-translational modification Leucine amide.

The protein belongs to the bombinin family. Expressed by the skin glands.

The protein localises to the secreted. Antimicrobial peptide with activity against Gram-positive and -negative bacteria and fungi. Shows activity against P.acnes (MIC=5 uM), E.coli (MIC=5-6.3 uM), S.aureus (MIC=5-6.3 uM), M.luteus, S.cerevisiae and C.albicans (MIC=10-12.5 uM). Also reduces the production of interleukin (IL)-8 and granulocyte-macrophage colony stimulating factor (CSF2) in normal human epidermal keratinocytes (NHEKs). Shows anticancer activity against three human hepatoma cell lines. In vivo, using the rat ear edema model, suppress P.acnes-induced skin inflammation, significantly reducing the ear thickness. Shows weak hemolytic activity against human erythrocytes. In terms of biological role, shows weak antimicrobial activity (tested on E.coli, S.aureus and C.albicans). Shows high hemolytic activity against human erythrocytes (38% erythrocyte lysis at 80.0 uM, and up to 85% at 159.7 uM). The sequence is that of Bombinins BLP-7/H-BO from Bombina orientalis (Oriental fire-bellied toad).